Here is a 258-residue protein sequence, read N- to C-terminus: Phosphate import ATP-binding protein PstB (258 aa).

One can recognise an ABC transporter domain in the interval 12 to 253; that stretch reads LEVKNLNFYY…PARKETEDYI (242 aa). Residue 44 to 51 participates in ATP binding; that stretch reads GPSGCGKS.

Belongs to the ABC transporter superfamily. Phosphate importer (TC 3.A.1.7) family. The complex is composed of two ATP-binding proteins (PstB), two transmembrane proteins (PstC and PstA) and a solute-binding protein (PstS).

Its subcellular location is the cell inner membrane. It carries out the reaction phosphate(out) + ATP + H2O = ADP + 2 phosphate(in) + H(+). In terms of biological role, part of the ABC transporter complex PstSACB involved in phosphate import. Responsible for energy coupling to the transport system. This chain is Phosphate import ATP-binding protein PstB, found in Bordetella pertussis (strain Tohama I / ATCC BAA-589 / NCTC 13251).